The sequence spans 670 residues: Protein ACCELERATED CELL DEATH 6 (670 aa).

Residues 1–456 (MDSSGADLDR…PNYIFHERWT (456 aa)) are Cytoplasmic-facing. Residues 18–47 (LVSHDQRKDFSHSGGVGTTSPTGDTEPVPK) form a disordered region. 10 ANK repeats span residues 66–95 (EMTP…PMER), 100–129 (TGDS…CLLF), 134–163 (SRQT…SALA), 182–211 (DGNT…DAPF), 216–248 (KGIS…NVDR), 260–290 (QGNK…SLMD), 295–325 (DGRT…GVYV), 329–358 (DGSF…ASKY), 363–391 (LGQN…DTKH), and 399–428 (DGNT…EILK). The chain crosses the membrane as a helical span at residues 457 to 477 (LALLLYAIHSSGFESVKSLTI). At 478–492 (QSVPLDPKKNRHYVN) the chain is on the extracellular side. A helical membrane pass occupies residues 493-513 (ALLVVAALVATVTFAAGFTIP). The Cytoplasmic segment spans residues 514-537 (GGYISDSKKPNLGRATLATNPTLF). The chain crosses the membrane as a helical span at residues 538 to 558 (IFLLFDILAMQSSVATICTLI). At 559–577 (WAQLGDLALILKSLHVALP) the chain is on the extracellular side. A helical membrane pass occupies residues 578 to 598 (LLLFSLLCMPVAFLFGVITAI). At 599-602 (AHVK) the chain is on the cytoplasmic side. Residues 603–623 (WLLVTISIISGGFFLFAIFIL) form a helical membrane-spanning segment. Topologically, residues 624-638 (GPHVMLQRSHLPPSS) are extracellular. The helical transmembrane segment at 639-659 (GIFLKTFMLTIDISELFVILI) threads the bilayer. The Cytoplasmic portion of the chain corresponds to 660–670 (KACFGCVACSE).

Component of large complexes containing, at least, FLS2, HSP70 and ACD6 in endoplasmic reticulum, plasma membrane and soluble fraction. Associated with HSP70 proteins during endoplasmic reticulum-associated degradation (ERAD). Reduced complex levels upon benzothiazole (BTH) treatment. In terms of processing, ubiquitinated. As to expression, basal expression requires light and salicylic acid (SA).

The protein localises to the cell membrane. It is found in the endoplasmic reticulum membrane. Its function is as follows. Dose-dependent activator of the defense response against virulent pathogens, including bacteria, fungi and oomycetes, that acts in a positive feedback loop with the defense signal salicylic acid (SA). Regulates the salicylic acid (SA) signaling pathway leading to cell death and modulating cell fate (e.g. cell enlargement and/or cell division). In response to SA signaling, triggers the accumulation of FLS2 at the plasma membrane, thus priming defenses. Involved in SA-dependent freezing signaling and tolerance. This Arabidopsis thaliana (Mouse-ear cress) protein is Protein ACCELERATED CELL DEATH 6.